The following is a 160-amino-acid chain: Lipoprotein signal peptidase (160 aa).

A run of 3 helical transmembrane segments spans residues 13-33 (IYIT…HLII), 72-92 (WFLS…ITKL), and 104-124 (SLII…GFVV). Catalysis depends on residues aspartate 125 and aspartate 143. The helical transmembrane segment at 134–154 (WHFATFNIADCSIFIGIIILM) threads the bilayer.

This sequence belongs to the peptidase A8 family.

The protein localises to the cell inner membrane. The catalysed reaction is Release of signal peptides from bacterial membrane prolipoproteins. Hydrolyzes -Xaa-Yaa-Zaa-|-(S,diacylglyceryl)Cys-, in which Xaa is hydrophobic (preferably Leu), and Yaa (Ala or Ser) and Zaa (Gly or Ala) have small, neutral side chains.. It functions in the pathway protein modification; lipoprotein biosynthesis (signal peptide cleavage). Its function is as follows. This protein specifically catalyzes the removal of signal peptides from prolipoproteins. The protein is Lipoprotein signal peptidase of Buchnera aphidicola subsp. Acyrthosiphon pisum (strain Tuc7).